The sequence spans 355 residues: Chemerin-like receptor 2 (355 aa).

The Extracellular segment spans residues 1–41 (MEDLEETLFEEFENYSYDLDYYSLESDLEEKVQLGVVHWVS). A glycan (N-linked (GlcNAc...) asparagine) is linked at Asn14. The chain crosses the membrane as a helical span at residues 42 to 62 (LVLYCLAFVLGIPGNAIVIWF). Residues 63-73 (TGFKWKKTVTT) are Cytoplasmic-facing. The chain crosses the membrane as a helical span at residues 74–94 (LWFLNLAIADFIFLLFLPLYI). Over 95 to 112 (SYVAMNFHWPFGIWLCKA) the chain is Extracellular. The cysteines at positions 110 and 187 are disulfide-linked. A helical transmembrane segment spans residues 113 to 133 (NSFTAQLNMFASVFFLTVISL). Over 134–154 (DHYIHLIHPVLSHRHRTLKNS) the chain is Cytoplasmic. A helical transmembrane segment spans residues 155–175 (LIVIIFIWLLASLIGGPALYF). At 176–210 (RDTVEFNNHTLCYNNFQKHDPDLTLIRHHVLTWVK) the chain is on the extracellular side. The helical transmembrane segment at 211 to 231 (FIIGYLFPLLTMSICYLCLIF) threads the bilayer. Residues 232–247 (KVKKRSILISSRHFWT) are Cytoplasmic-facing. The chain crosses the membrane as a helical span at residues 248 to 268 (ILVVVVAFVVCWTPYHLFSIW). At 269–286 (ELTIHHNSYSHHVMQAGI) the chain is on the extracellular side. The chain crosses the membrane as a helical span at residues 287–307 (PLSTGLAFLNSCLNPILYVLI). At 308–355 (SKKFQARFRSSVAEILKYTLWEVSCSGTVSEQLRNSETKNLCLLETAQ) the chain is on the cytoplasmic side.

This sequence belongs to the chemokine-like receptor (CMKLR) family. As to expression, expressed in hippocampus.

It localises to the cell membrane. Receptor for chemoattractant adipokine chemerin/RARRES2 suggesting a role for this receptor in the regulation of inflammation and energy homesotasis. Signals mainly via beta-arrestin pathway. Binding of RARRES2 activates weakly G proteins, calcium mobilization and MAPK1/MAPK3 (ERK1/2) phosphorylation too. Also acts as a receptor for TAFA1, mediates its effects on neuronal stem-cell proliferation and differentiation via the activation of ROCK/ERK and ROCK/STAT3 signaling pathway. In terms of biological role, (Microbial infection) Coreceptor for HIV-1. The protein is Chemerin-like receptor 2 of Homo sapiens (Human).